We begin with the raw amino-acid sequence, 73 residues long: Homeodomain-only protein (73 aa).

A DNA-binding region (homeobox; degenerate) is located at residues 3–62 (TEKSVTPTEEQLEILEYNFCKVNKHPDPTTLCLIAAETGLSEEQTLKWFKQRLAEWRKSE).

The protein localises to the nucleus. The protein resides in the cytoplasm. Its function is as follows. Atypical homeodomain protein which does not bind DNA and is required to modulate cardiac growth and development. May act via an interaction with SRF, leading to modulate the expression of SRF-dependent cardiac-specific genes and cardiac development. May act as a co-chaperone for HSPA1A and HSPA1B chaperone proteins and assist in chaperone-mediated protein refolding. The protein is Homeodomain-only protein (HOPX) of Gallus gallus (Chicken).